A 50-amino-acid chain; its full sequence is Defensin-like protein 1 (50 aa).

4 disulfide bridges follow: C3–C50, C14–C35, C20–C44, and C24–C46.

It belongs to the DEFL family.

It localises to the secreted. Functionally, possesses antimicrobial activity sensitive to inorganic cations. Has no inhibitory effect on insect gut alpha-amylase. Induces potential changes in fungal membranes and increased K+ efflux and Ca(2+) uptake. Interacts with sphingolipids and ergosterols found in fungal plasma membranes. This is Defensin-like protein 1 from Dahlia merckii (Bedding dahlia).